The sequence spans 1872 residues: Fatty acid synthase beta subunit pkiC (1872 aa).

The acetyltransferase (AT) domain stretch occupies residues 174–425; the sequence is VFGGQGECSR…DQSRIPFRDR (252 aa). An enoyl reductase (ER) domain region spans residues 591–836; it reads NRVLGAPPIM…IIAATPGVSD (246 aa). Positions 1111 to 1132 are disordered; that stretch reads TTPASWSTLSLTERDTSEETSD. Positions 1158-1597 are dehydratase (DH) domain; the sequence is PSHPLWMRAL…MPLEKLVVEI (440 aa). Positions 1518–1617 constitute a MaoC-like domain; it reads PPSNEPYAQL…CFSILAKRKE (100 aa).

This sequence belongs to the fungal fatty acid synthetase subunit beta family. [Alpha(6)beta(6)] hexamers of two multifunctional subunits (alpha and beta).

The enzyme catalyses acetyl-CoA + n malonyl-CoA + 2n NADPH + 4n H(+) = a long-chain-acyl-CoA + n CoA + n CO2 + 2n NADP(+).. It carries out the reaction holo-[ACP] + acetyl-CoA = acetyl-[ACP] + CoA. It catalyses the reaction holo-[ACP] + malonyl-CoA = malonyl-[ACP] + CoA. The catalysed reaction is a (3R)-hydroxyacyl-[ACP] = a (2E)-enoyl-[ACP] + H2O. The enzyme catalyses a 2,3-saturated acyl-[ACP] + NAD(+) = a (2E)-enoyl-[ACP] + NADH + H(+). It carries out the reaction (9Z)-octadecenoyl-[ACP] + H2O = (9Z)-octadecenoate + holo-[ACP] + H(+). It functions in the pathway secondary metabolite biosynthesis. In terms of biological role, fatty acid synthase beta subunit; part of the pki gene cluster that mediates the biosynthesis of 2,4-dihydroxy-3-methyl-6-(2-oxoundecyl)benzaldehyde. The first step in the pathway is the generation of the decanoyl starter unit by the FAS composed of subunits pkiB and pkiC, which is then transferred directly from the FAS to the SAT domain of the non-reducing polyketide synthase pkiA. PkiA condenses the decanoyyl starter unit with 4 malonyl-CoA units and performs one methylation step to yield 2,4-dihydroxy-3-methyl-6-(2-oxoundecyl)benzaldehyde. The protein is Fatty acid synthase beta subunit pkiC of Emericella nidulans (strain FGSC A4 / ATCC 38163 / CBS 112.46 / NRRL 194 / M139) (Aspergillus nidulans).